Reading from the N-terminus, the 186-residue chain is MRLNVVVAVSENWGIGKGGGLPWKIKKDMEFFKTVTTKAHPGLKNAVVMGRVTWESIPESFKPLKDRINIVVSSTLSHAPSFVQVVPSLNAAIDLLYNEEFSSIVDEVFIIGGYRLYKEALKQSIYPVRIYCTHILSEVDCDTYFPKVDWDKLKKVDLPDIPADTFTENGFTFKFCVYDVPSEQFI.

The 179-residue stretch at 2-180 (RLNVVVAVSE…FTFKFCVYDV (179 aa)) folds into the DHFR domain. Residues Ala-8 and 14–20 (GIGKGGG) contribute to the NADP(+) site. Substrate is bound at residue 28 to 33 (DMEFFK). Position 51–53 (51–53 (RVT)) interacts with NADP(+). Residue Arg-67 participates in substrate binding. Residues 73–75 (SST) and 112–119 (GGYRLYKE) each bind NADP(+).

It belongs to the dihydrofolate reductase family. In terms of assembly, monomer.

The enzyme catalyses (6S)-5,6,7,8-tetrahydrofolate + NADP(+) = 7,8-dihydrofolate + NADPH + H(+). It participates in cofactor biosynthesis; tetrahydrofolate biosynthesis; 5,6,7,8-tetrahydrofolate from 7,8-dihydrofolate: step 1/1. Functionally, key enzyme in folate metabolism. Contributes to the de novo mitochondrial thymidylate biosynthesis pathway. Catalyzes an essential reaction for de novo glycine and purine synthesis, and for DNA precursor synthesis. This Schistosoma mansoni (Blood fluke) protein is Dihydrofolate reductase.